Consider the following 198-residue polypeptide: Putative Do-like 15 protein (198 aa).

A serine protease region spans residues 48–198 (KIFSFSREPN…VFENDSPSDK (151 aa)). Residues histidine 86 and serine 175 each act as charge relay system in the active site.

This sequence belongs to the peptidase S1B family.

In Arabidopsis thaliana (Mouse-ear cress), this protein is Putative Do-like 15 protein (DEGP15).